A 1779-amino-acid chain; its full sequence is Collagen alpha-1(IV) chain (1779 aa).

Positions 1–23 (MLPFWKRLLYAAVIAGALVGADA) are cleaved as a signal peptide. An N-linked (GlcNAc...) asparagine glycan is attached at asparagine 72. Disordered regions lie at residues 89–643 (GNRG…KPAL), 655–1187 (DKGY…LPGL), 1200–1285 (TGAP…IGPR), and 1336–1530 (GLPG…RGYE). Over residues 144 to 163 (QAGVPGVQGPAGNPGAPGIN) the composition is skewed to low complexity. 2 stretches are compositionally biased toward basic and acidic residues: residues 196 to 217 (KGEKGEPAKENGDYAKGEKGEP) and 249 to 259 (PRGEHGLKGEK). Positions 360-369 (PGLNGLPGNP) are enriched in low complexity. Gly residues predominate over residues 434–443 (GQKGGAGLPG). The segment covering 531–545 (GRPGTPGAAGAPGQK) has biased composition (low complexity). Residues 724-747 (PGFHGRDGAKGDKGSFGRSGEKGE) are compositionally biased toward basic and acidic residues. 2 stretches are compositionally biased toward low complexity: residues 913–931 (VGPIGPAGVAGPPGVPGID) and 1015–1036 (PGLMGIKGDQGLAGAPGQQGLD). A compositionally biased stretch (basic and acidic residues) spans 1106-1127 (EKGDQGRSGIDGRDGINGEKGE). The span at 1151-1170 (APGMDGLPGAAGAPGAVGYP) shows a compositional bias: low complexity. 3 stretches are compositionally biased toward basic and acidic residues: residues 1224 to 1245 (IRGDKGSQGERGYTGEKGEQGE), 1496 to 1505 (ERGEKGERGL), and 1517 to 1529 (PKGDRGEPGERGY). The Collagen IV NC1 domain maps to 1555–1778 (GILITRHSQS…SRCQVCMKNS (224 aa)). Intrachain disulfides connect cysteine 1570–cysteine 1659, cysteine 1603–cysteine 1656, cysteine 1615–cysteine 1621, cysteine 1678–cysteine 1774, cysteine 1712–cysteine 1771, and cysteine 1724–cysteine 1731.

It belongs to the type IV collagen family. As to quaternary structure, trimers of two alpha 1(IV) and one alpha 2(IV) chain. Type IV collagen forms a mesh-like network linked through intermolecular interactions between 7S domains and between NC1 domains. In terms of processing, prolines at the third position of the tripeptide repeating unit (G-X-Y) are hydroxylated in some or all of the chains. Type IV collagens contain numerous cysteine residues which are involved in inter- and intramolecular disulfide bonding. 12 of these, located in the NC1 domain, are conserved in all known type IV collagens.

The protein resides in the secreted. Its subcellular location is the extracellular space. It localises to the extracellular matrix. The protein localises to the basement membrane. Collagen type IV is specific for basement membranes. This chain is Collagen alpha-1(IV) chain, found in Drosophila melanogaster (Fruit fly).